Reading from the N-terminus, the 150-residue chain is Large ribosomal subunit protein bL9 (150 aa).

Belongs to the bacterial ribosomal protein bL9 family.

Its function is as follows. Binds to the 23S rRNA. The chain is Large ribosomal subunit protein bL9 from Yersinia pseudotuberculosis serotype I (strain IP32953).